The sequence spans 159 residues: MALVRVSCMLALLLIAGQGQAAPVKTEGSTLGLLGGGFGGSVGLSAGIGVGGGLYSGFGGGGYPGGYASGYPGGYGGGYSGYNGYGGSGFGGGYYPGGGYSGFGHRPHHHGGYYPGGGSYHNQGGSYGGHYSQSQYSNGYYGGGGYGGGGYGGNGFFGK.

Positions 1-21 (MALVRVSCMLALLLIAGQGQA) are cleaved as a signal peptide.

As to expression, larval (posterior) and imaginal (anterior) epidermis.

Functionally, component of the pupal cuticle. The protein is Pupal cuticle protein Edg-91 (Edg91) of Drosophila melanogaster (Fruit fly).